We begin with the raw amino-acid sequence, 174 residues long: 3-hydroxydecanoyl-[acyl-carrier-protein] dehydratase (174 aa).

Residue histidine 73 is part of the active site.

The protein belongs to the thioester dehydratase family. FabA subfamily. Homodimer.

It is found in the cytoplasm. The enzyme catalyses a (3R)-hydroxyacyl-[ACP] = a (2E)-enoyl-[ACP] + H2O. It carries out the reaction (3R)-hydroxydecanoyl-[ACP] = (2E)-decenoyl-[ACP] + H2O. It catalyses the reaction (2E)-decenoyl-[ACP] = (3Z)-decenoyl-[ACP]. It participates in lipid metabolism; fatty acid biosynthesis. In terms of biological role, necessary for the introduction of cis unsaturation into fatty acids. Catalyzes the dehydration of (3R)-3-hydroxydecanoyl-ACP to E-(2)-decenoyl-ACP and then its isomerization to Z-(3)-decenoyl-ACP. Can catalyze the dehydratase reaction for beta-hydroxyacyl-ACPs with saturated chain lengths up to 16:0, being most active on intermediate chain length. The sequence is that of 3-hydroxydecanoyl-[acyl-carrier-protein] dehydratase from Saccharophagus degradans (strain 2-40 / ATCC 43961 / DSM 17024).